The sequence spans 469 residues: ATP synthase subunit beta (469 aa).

Residue 156-163 (GGAGVGKT) coordinates ATP.

The protein belongs to the ATPase alpha/beta chains family. F-type ATPases have 2 components, CF(1) - the catalytic core - and CF(0) - the membrane proton channel. CF(1) has five subunits: alpha(3), beta(3), gamma(1), delta(1), epsilon(1). CF(0) has three main subunits: a(1), b(2) and c(9-12). The alpha and beta chains form an alternating ring which encloses part of the gamma chain. CF(1) is attached to CF(0) by a central stalk formed by the gamma and epsilon chains, while a peripheral stalk is formed by the delta and b chains.

Its subcellular location is the cell membrane. It carries out the reaction ATP + H2O + 4 H(+)(in) = ADP + phosphate + 5 H(+)(out). In terms of biological role, produces ATP from ADP in the presence of a proton gradient across the membrane. The catalytic sites are hosted primarily by the beta subunits. This Lactococcus lactis subsp. cremoris (strain MG1363) protein is ATP synthase subunit beta.